The chain runs to 163 residues: Cytochrome c-type biogenesis protein CcmE (163 aa).

Residues 1–8 (MNPRRKKR) lie on the Cytoplasmic side of the membrane. A helical; Signal-anchor for type II membrane protein membrane pass occupies residues 9–29 (LTIILAISAGLAAVIGLVLYA). The Periplasmic portion of the chain corresponds to 30-163 (LSQNIDLFYT…TEAQLKGAKQ (134 aa)). Residues H131 and Y135 each contribute to the heme site.

This sequence belongs to the CcmE/CycJ family.

It localises to the cell inner membrane. Its function is as follows. Heme chaperone required for the biogenesis of c-type cytochromes. Transiently binds heme delivered by CcmC and transfers the heme to apo-cytochromes in a process facilitated by CcmF and CcmH. This Aeromonas salmonicida (strain A449) protein is Cytochrome c-type biogenesis protein CcmE.